The following is a 93-amino-acid chain: Non-histone chromosomal protein 6A (93 aa).

2 disordered regions span residues 1 to 23 (MVTP…APKR) and 69 to 93 (PYEA…ATLA). A compositionally biased stretch (basic residues) spans 7 to 16 (PKKRTTRKKK). The HMG box DNA-binding region spans 21-89 (PKRALSAYMF…RYESEKELYN (69 aa)). The segment covering 69–87 (PYEAKAQADKKRYESEKEL) has biased composition (basic and acidic residues).

It belongs to the NHP6 family. Weakly associates with the stable SPT16-POB3 heterodimer to form the FACT (yFACT or SNP) complex, which is associated with nucleosomes. Multiple molecules of NHP6 (NHP6A and/or NHP6B) are required to recruit the SPT16-POB3 heterodimer to DNA.

The protein localises to the nucleus. Its subcellular location is the chromosome. In terms of biological role, DNA-binding protein that induces severe bending of DNA. Required for DNA-binding by the FACT complex, a general chromatin factor that acts to reorganize nucleosomes. The FACT complex is involved in multiple processes that require DNA as a template such as mRNA elongation, DNA replication and DNA repair. Also augments the fidelity of transcription by RNA polymerase III independently of any role in the FACT complex. Required for transcriptional initiation fidelity of some but not all tRNA genes. Seems to be functionally redundant with NHP6B. In Saccharomyces cerevisiae (strain ATCC 204508 / S288c) (Baker's yeast), this protein is Non-histone chromosomal protein 6A (NHP6A).